A 445-amino-acid chain; its full sequence is Rab GDP dissociation inhibitor beta (445 aa).

N-acetylmethionine is present on M1. Residue K112 is modified to N6-acetyllysine. Phosphoserine is present on S130. An N6-acetyllysine modification is found at K269. The residue at position 382 (S382) is a Phosphoserine.

This sequence belongs to the Rab GDI family. In terms of assembly, interacts with RHOH. Interacts with the GDP-bound inactive forms of RAB3A, RAB3B, RAB3C, RAB5A, RAB5B, RAB5C, RAB8A, RAB8B, RAB10, RAB12, RAB35, and RAB43; binds RAB3D to a lesser extent. Interacts with DZIP1; this interaction negatively regulates the interaction of GDI2 with GDP-bound RAB8A.

The protein localises to the cytoplasm. Its subcellular location is the membrane. It localises to the golgi apparatus. It is found in the trans-Golgi network. Its function is as follows. GDP-dissociation inhibitor preventing the GDP to GTP exchange of most Rab proteins. By keeping these small GTPases in their inactive GDP-bound form regulates intracellular membrane trafficking. Negatively regulates protein transport to the cilium and ciliogenesis through the inhibition of RAB8A. This Sus scrofa (Pig) protein is Rab GDP dissociation inhibitor beta (GDI2).